Reading from the N-terminus, the 611-residue chain is Chaperone protein DnaK (611 aa).

At threonine 173 the chain carries Phosphothreonine; by autocatalysis. Residues 579-592 (AAGQAEGAQGAQDA) are compositionally biased toward low complexity. The tract at residues 579 to 611 (AAGQAEGAQGAQDAGAKKDNVVDAEFEEVKEDK) is disordered. The span at 600–611 (VDAEFEEVKEDK) shows a compositional bias: acidic residues.

This sequence belongs to the heat shock protein 70 family.

Functionally, acts as a chaperone. This Bacillus mycoides (strain KBAB4) (Bacillus weihenstephanensis) protein is Chaperone protein DnaK.